Consider the following 776-residue polypeptide: Isoamylase (776 aa).

A signal peptide spans 1–26 (MKCPKILAALLGCAVLAGVPAMPAHA). Ca(2+) is bound by residues D154, E255, T256, N258, and D285. The active-site Nucleophile is D401. C410 and C422 are disulfide-bonded. E461 serves as the catalytic Proton donor. 2 disulfides stabilise this stretch: C546–C616 and C738–C766.

This sequence belongs to the glycosyl hydrolase 13 family. Monomer. Requires Ca(2+) as cofactor.

It carries out the reaction Hydrolysis of (1-&gt;6)-alpha-D-glucosidic branch linkages in glycogen, amylopectin and their beta-limit dextrins.. The sequence is that of Isoamylase (iam) from Pseudomonas sp. (strain SMP1).